A 1204-amino-acid chain; its full sequence is Exportin-5 (1204 aa).

At A2 the chain carries N-acetylalanine. The tract at residues 2–108 is necessary for interaction with Ran; sequence AMDQVNALCE…ANGTLNILEE (107 aa). Position 396 is an N6-acetyllysine (K396). Residues 533–640 form a necessary for interaction with ILF3 region; that stretch reads ELLQMVLNFD…KQLLSNELLL (108 aa). The segment at 641–642 is pre-miRNA binding; it reads TQ. At S826 the chain carries Phosphoserine.

The protein belongs to the exportin family. Component of a nuclear export receptor complex composed of XPO5, RAN, dsRNA-binding proteins and dsRNA. Found in a nuclear export complex with XPO5, RAN, EEF1A1, and aminoacylated tRNA. Found in a nuclear export complex with XPO5, RAN, ILF3 and dsRNA. Found in a nuclear export complex with XPO5, RAN and pre-miRNA. Found in a nuclear export complex with XPO5, RAN, ILF3 and minihelix VA1 dsRNA. Found in a nuclear export complex with XPO5, RAN, ILF3, ZNF346 and dsRNA. Interacts with EEF1A1, ILF3, NUP153, NUP214 and ZNF346. Interacts with RAN and cargo proteins in a GTP-dependent manner. Interacts with isoform 5 of ADAR/ADAR1 (via DRBM domains). Interacts with SMAD4; mediates nuclear export of SMAD4. Interacts with RAN (GTP-bound form). Expressed in heart, brain, placenta, lung, skeletal muscle, kidney and pancreas.

It is found in the nucleus. It localises to the cytoplasm. Functionally, mediates the nuclear export of proteins bearing a double-stranded RNA binding domain (dsRBD) and double-stranded RNAs (cargos). XPO5 in the nucleus binds cooperatively to the RNA and to the GTPase Ran in its active GTP-bound form. Proteins containing dsRBDs can associate with this trimeric complex through the RNA. Docking of this complex to the nuclear pore complex (NPC) is mediated through binding to nucleoporins. Upon transit of a nuclear export complex into the cytoplasm, hydrolysis of Ran-GTP to Ran-GDP (induced by RANBP1 and RANGAP1, respectively) cause disassembly of the complex and release of the cargo from the export receptor. XPO5 then returns to the nuclear compartment by diffusion through the nuclear pore complex, to mediate another round of transport. The directionality of nuclear export is thought to be conferred by an asymmetric distribution of the GTP- and GDP-bound forms of Ran between the cytoplasm and nucleus. Overexpression may in some circumstances enhance RNA-mediated gene silencing (RNAi). Mediates nuclear export of isoform 5 of ADAR/ADAR1 in a RanGTP-dependent manner. Its function is as follows. Mediates the nuclear export of micro-RNA precursors, which form short hairpins. Also mediates the nuclear export of synthetic short hairpin RNAs used for RNA interference. In some circumstances can also mediate the nuclear export of deacylated and aminoacylated tRNAs. Specifically recognizes dsRNAs that lack a 5'-overhang in a sequence-independent manner, have only a short 3'-overhang, and that have a double-stranded length of at least 15 base-pairs. Binding is dependent on Ran-GTP. In terms of biological role, (Microbial infection) Mediates the nuclear export of adenovirus VA1 dsRNA. This is Exportin-5 (XPO5) from Homo sapiens (Human).